The following is a 600-amino-acid chain: Elongation factor 4 (600 aa).

The region spanning 4–186 is the tr-type G domain; it reads SKIRNFSIIA…AIVEKIPSPS (183 aa). GTP-binding positions include 16-21 and 133-136; these read DHGKST and NKID.

This sequence belongs to the TRAFAC class translation factor GTPase superfamily. Classic translation factor GTPase family. LepA subfamily.

It localises to the cell membrane. It carries out the reaction GTP + H2O = GDP + phosphate + H(+). Functionally, required for accurate and efficient protein synthesis under certain stress conditions. May act as a fidelity factor of the translation reaction, by catalyzing a one-codon backward translocation of tRNAs on improperly translocated ribosomes. Back-translocation proceeds from a post-translocation (POST) complex to a pre-translocation (PRE) complex, thus giving elongation factor G a second chance to translocate the tRNAs correctly. Binds to ribosomes in a GTP-dependent manner. The sequence is that of Elongation factor 4 from Mycoplasma mycoides subsp. mycoides SC (strain CCUG 32753 / NCTC 10114 / PG1).